The sequence spans 97 residues: U6-theraphotoxin-Hhn1a 1 (97 aa).

The signal sequence occupies residues 1–33 (MLIKQFSRRSKNMKVQILLAFAALFVLAVGSYA). Positions 34–61 (SESKKLDLRDALFSAMFSADYQLNPQER) are excised as a propeptide. Cystine bridges form between C63–C77, C70–C82, and C76–C89.

The protein belongs to the neurotoxin 10 (Hwtx-1) family. 12 (Hntx-12) subfamily. In terms of tissue distribution, expressed by the venom gland.

It localises to the secreted. Functionally, ion channel inhibitor. The chain is U6-theraphotoxin-Hhn1a 1 from Cyriopagopus hainanus (Chinese bird spider).